Reading from the N-terminus, the 227-residue chain is ATP-dependent dethiobiotin synthetase BioD (227 aa).

13-18 is a binding site for ATP; sequence DIGKTY. Thr-17 is a Mg(2+) binding site. Residue Lys-38 is part of the active site. Ser-42 is a substrate binding site. ATP contacts are provided by residues Asp-55, 116–119, and 179–180; these read EGSG and NN. Mg(2+)-binding residues include Asp-55 and Glu-116.

Belongs to the dethiobiotin synthetase family. As to quaternary structure, homodimer. Requires Mg(2+) as cofactor.

The protein localises to the cytoplasm. It carries out the reaction (7R,8S)-7,8-diammoniononanoate + CO2 + ATP = (4R,5S)-dethiobiotin + ADP + phosphate + 3 H(+). It participates in cofactor biosynthesis; biotin biosynthesis; biotin from 7,8-diaminononanoate: step 1/2. Its function is as follows. Catalyzes a mechanistically unusual reaction, the ATP-dependent insertion of CO2 between the N7 and N8 nitrogen atoms of 7,8-diaminopelargonic acid (DAPA, also called 7,8-diammoniononanoate) to form a ureido ring. The polypeptide is ATP-dependent dethiobiotin synthetase BioD (Clostridium botulinum (strain Okra / Type B1)).